The sequence spans 253 residues: Coenzyme F420:L-glutamate ligase (253 aa).

GTP-binding positions include 9–12, 38–39, and lysine 43; these read LPEI and ST. Aspartate 113 contacts a divalent metal cation. Asparagine 116 is a GTP binding site. 3 residues coordinate a divalent metal cation: aspartate 150, threonine 151, and glutamate 208. A GTP-binding site is contributed by 206-213; that stretch reads SGEGDDGT.

This sequence belongs to the CofE family. As to quaternary structure, homodimer. Mg(2+) serves as cofactor. Mn(2+) is required as a cofactor. Requires K(+) as cofactor.

The catalysed reaction is oxidized coenzyme F420-0 + GTP + L-glutamate = oxidized coenzyme F420-1 + GDP + phosphate + H(+). The enzyme catalyses oxidized coenzyme F420-1 + GTP + L-glutamate = oxidized coenzyme F420-2 + GDP + phosphate + H(+). Its pathway is cofactor biosynthesis; coenzyme F420 biosynthesis. Functionally, catalyzes the GTP-dependent successive addition of two or more gamma-linked L-glutamates to the L-lactyl phosphodiester of 7,8-didemethyl-8-hydroxy-5-deazariboflavin (F420-0) to form coenzyme F420-0-glutamyl-glutamate (F420-2) or polyglutamated F420 derivatives. In Halobacterium salinarum (strain ATCC 29341 / DSM 671 / R1), this protein is Coenzyme F420:L-glutamate ligase.